A 217-amino-acid polypeptide reads, in one-letter code: Glyoxalase ElbB (217 aa).

C135 (nucleophile) is an active-site residue.

The protein belongs to the peptidase C56 family. Homodimer.

It catalyses the reaction glyoxal + H2O = glycolate + H(+). In terms of biological role, displays glyoxalase activity, catalyzing the conversion of glyoxal to glycolate. However, this apparent glyoxalase activity may reflect a protein deglycase activity, which could be the primary function of this protein like other DJ-1 superfamily members such as PARK7, YajL, YhbO and HchA. Is not able to use methylglyoxal as substrate. The sequence is that of Glyoxalase ElbB from Escherichia coli (strain K12).